The primary structure comprises 122 residues: Small ribosomal subunit protein uS13 (122 aa).

Residues 99 to 122 (RGQRTHTNARTRKGPAKAIAGKKK) form a disordered region.

The protein belongs to the universal ribosomal protein uS13 family. As to quaternary structure, part of the 30S ribosomal subunit. Forms a loose heterodimer with protein S19. Forms two bridges to the 50S subunit in the 70S ribosome.

In terms of biological role, located at the top of the head of the 30S subunit, it contacts several helices of the 16S rRNA. In the 70S ribosome it contacts the 23S rRNA (bridge B1a) and protein L5 of the 50S subunit (bridge B1b), connecting the 2 subunits; these bridges are implicated in subunit movement. Contacts the tRNAs in the A and P-sites. This chain is Small ribosomal subunit protein uS13, found in Rhizobium etli (strain CIAT 652).